We begin with the raw amino-acid sequence, 291 residues long: 5-hydroxytryptamine receptor 1D (291 aa).

The chain crosses the membrane as a helical span at residues 30–54; sequence LCDIWLSSDITCCTASILHLCVIAL. A disulfide bridge links Cys-31 with Cys-108. Positions 38 and 42 each coordinate serotonin. Residues 55–57 carry the DRY motif; important for ligand-induced conformation changes motif; it reads DRY. The helical transmembrane segment at 75 to 96 threads the bilayer; that stretch reads AAAMIAIVWAISICISIPPLFW. Asn-111 carries an N-linked (GlcNAc...) asparagine glycan. Helical transmembrane passes span 115–138, 221–246, and 256–279; these read ISYT…ILYG, KTLG…VLPI, and ALFD…YTVF. Ser-241 contacts serotonin. Residues 272-276 carry the NPxxY motif; important for ligand-induced conformation changes and signaling motif; it reads NPIIY.

This sequence belongs to the G-protein coupled receptor 1 family. As to quaternary structure, homodimer. Heterodimer with HTR1B.

The protein resides in the cell membrane. In terms of biological role, G-protein coupled receptor for 5-hydroxytryptamine (serotonin). Also functions as a receptor for ergot alkaloid derivatives, various anxiolytic and antidepressant drugs and other psychoactive substances. Ligand binding causes a conformation change that triggers signaling via guanine nucleotide-binding proteins (G proteins) and modulates the activity of downstream effectors, such as adenylate cyclase. HTR1D is coupled to G(i)/G(o) G alpha proteins and mediates inhibitory neurotransmission by inhibiting adenylate cyclase activity. Regulates the release of 5-hydroxytryptamine in the brain, and thereby affects neural activity. May also play a role in regulating the release of other neurotransmitters. May play a role in vasoconstriction. The protein is 5-hydroxytryptamine receptor 1D (HTR1D) of Sus scrofa (Pig).